The following is a 322-amino-acid chain: Fructose-1,6-bisphosphatase class 1 (322 aa).

Mg(2+)-binding residues include E84, D103, L105, and D106. Residues 106-109, N198, and K264 contribute to the substrate site; that span reads DGSS. E270 lines the Mg(2+) pocket.

The protein belongs to the FBPase class 1 family. In terms of assembly, homotetramer. It depends on Mg(2+) as a cofactor.

The protein resides in the cytoplasm. The catalysed reaction is beta-D-fructose 1,6-bisphosphate + H2O = beta-D-fructose 6-phosphate + phosphate. The protein operates within carbohydrate biosynthesis; gluconeogenesis. The protein is Fructose-1,6-bisphosphatase class 1 of Colwellia psychrerythraea (strain 34H / ATCC BAA-681) (Vibrio psychroerythus).